A 32-amino-acid polypeptide reads, in one-letter code: Beta-amanitin proprotein (32 aa).

Residues 1–10 (MSDINATRLP) constitute a propeptide that is removed on maturation. The segment at residues 11 to 18 (IWGIGCDP) is a cross-link (cyclopeptide (Ile-Pro)). The 2'-cysteinyl-6'-hydroxytryptophan sulfoxide (Trp-Cys) cross-link spans 12–16 (WGIGC). Positions 19–32 (CIGDDVTILLTRGE) are excised as a propeptide.

The protein belongs to the MSDIN fungal toxin family. Post-translationally, processed by the macrocyclase-peptidase enzyme POPB to yield a toxic cyclic decapeptide. POPB first removes 10 residues from the N-terminus. Conformational trapping of the remaining peptide forces the enzyme to release this intermediate rather than proceed to macrocyclization. The enzyme rebinds the remaining peptide in a different conformation and catalyzes macrocyclization of the N-terminal 8 residues.

In terms of biological role, toxin belonging to the bicyclic octapeptides amatoxins that acts by binding non-competitively to RNA polymerase II and greatly slowing the elongation of transcripts from target promoters. This chain is Beta-amanitin proprotein, found in Amanita phalloides (Death cap).